Consider the following 462-residue polypeptide: Annexin A7 (462 aa).

Positions 1–130 (MSYPPNQGYP…QGYPPQQGYP (130 aa)) are disordered. The tract at residues 7–131 (QGYPPQSNSP…GYPPQQGYPP (125 aa)) is 19 X 6 AA tandem repeats of Q-G-Y-P-P-Q. Residues 16–130 (PQPGQYGAPQ…QGYPPQQGYP (115 aa)) are compositionally biased toward low complexity. 4 Annexin repeats span residues 161 to 232 (HDCK…ALLT), 233 to 304 (EPAH…KLTE), 315 to 388 (MQVS…AIVT), and 392 to 462 (NPYG…DIIS).

Belongs to the annexin family.

Calcium/phospholipid-binding protein which promotes membrane fusion and is involved in exocytosis. This Dictyostelium discoideum (Social amoeba) protein is Annexin A7 (nxnA).